We begin with the raw amino-acid sequence, 101 residues long: Small ribosomal subunit protein uS14 (101 aa).

The span at 1–10 shows a compositional bias: basic and acidic residues; the sequence is MAKKSSIEKN. The interval 1 to 25 is disordered; it reads MAKKSSIEKNNRRKKMAKNAAPKRE.

Belongs to the universal ribosomal protein uS14 family. Part of the 30S ribosomal subunit. Contacts proteins S3 and S10.

Functionally, binds 16S rRNA, required for the assembly of 30S particles and may also be responsible for determining the conformation of the 16S rRNA at the A site. This chain is Small ribosomal subunit protein uS14, found in Rhodopseudomonas palustris (strain BisA53).